The chain runs to 445 residues: Chromosomal replication initiator protein DnaA (445 aa).

Residues methionine 1–lysine 73 are domain I, interacts with DnaA modulators. The tract at residues lysine 73–threonine 106 is domain II. The segment at methionine 107–serine 323 is domain III, AAA+ region. Residues glycine 151, glycine 153, lysine 154, and threonine 155 each contribute to the ATP site. Residues serine 324–lysine 445 form a domain IV, binds dsDNA region.

This sequence belongs to the DnaA family. In terms of assembly, oligomerizes as a right-handed, spiral filament on DNA at oriC.

The protein localises to the cytoplasm. In terms of biological role, plays an essential role in the initiation and regulation of chromosomal replication. ATP-DnaA binds to the origin of replication (oriC) to initiate formation of the DNA replication initiation complex once per cell cycle. Binds the DnaA box (a 9 base pair repeat at the origin) and separates the double-stranded (ds)DNA. Forms a right-handed helical filament on oriC DNA; dsDNA binds to the exterior of the filament while single-stranded (ss)DNA is stabiized in the filament's interior. The ATP-DnaA-oriC complex binds and stabilizes one strand of the AT-rich DNA unwinding element (DUE), permitting loading of DNA polymerase. After initiation quickly degrades to an ADP-DnaA complex that is not apt for DNA replication. Binds acidic phospholipids. The chain is Chromosomal replication initiator protein DnaA from Clostridium botulinum (strain Loch Maree / Type A3).